The chain runs to 270 residues: MAFTRIHSFLASAGNTSMYKRVWRFWYPLMTHKLGTDEIMFINWAYEEDPPMALPLEASDEPNRAHINLYHRTATQVNLSGKRILEVSCGHGGGASYLTRALHPASYTGLDLNPAGIKLCQKRHQLPGLEFVRGDAENLPFDNESFDVVINIEASHCYPHFPRFLAEVVRVLRPGGHLAYADLRPSNKVGEWEVDFANSRLQQLSQREINAEVLRGIASNSQKSRDLVDRHLPAFLRFAGREFIGVQGTQLSRYLEGGELSYRMYSFAKD.

This sequence belongs to the methyltransferase superfamily. Phthiotriol/phenolphthiotriol dimycocerosates methyltransferase family.

Functionally, catalyzes the methylation of the lipid moiety of the intermediate compounds phthiotriol and glycosylated phenolphthiotriol dimycoserosates to form phthiocerol dimycocerosates (DIM A) and glycosylated phenolphthiocerol dimycocerosates (PGL). The chain is Phthiotriol/phenolphthiotriol dimycocerosates methyltransferase from Mycobacterium leprae (strain TN).